Reading from the N-terminus, the 250-residue chain is NADH-quinone oxidoreductase subunit C (250 aa).

It belongs to the complex I 30 kDa subunit family. As to quaternary structure, NDH-1 is composed of 14 different subunits. Subunits NuoB, C, D, E, F, and G constitute the peripheral sector of the complex.

It localises to the cell inner membrane. The catalysed reaction is a quinone + NADH + 5 H(+)(in) = a quinol + NAD(+) + 4 H(+)(out). Functionally, NDH-1 shuttles electrons from NADH, via FMN and iron-sulfur (Fe-S) centers, to quinones in the respiratory chain. The immediate electron acceptor for the enzyme in this species is believed to be ubiquinone. Couples the redox reaction to proton translocation (for every two electrons transferred, four hydrogen ions are translocated across the cytoplasmic membrane), and thus conserves the redox energy in a proton gradient. This is NADH-quinone oxidoreductase subunit C from Xanthomonas oryzae pv. oryzae (strain PXO99A).